The primary structure comprises 201 residues: Holliday junction branch migration complex subunit RuvA (201 aa).

The interval 1–64 is domain I; the sequence is MYEYIRGQFQ…EDFIGLYGFT (64 aa). The segment at 65-143 is domain II; the sequence is TKEELEMFKL…PDELTSEEEQ (79 aa). The segment at 144–152 is flexible linker; that stretch reads LIEGINDNS. Residues 153–201 are domain III; that stretch reads DYSFNINETLSALMALGYTEKEAQKALEKVDKTLSIENMIKESLKLLMR.

The protein belongs to the RuvA family. In terms of assembly, homotetramer. Forms an RuvA(8)-RuvB(12)-Holliday junction (HJ) complex. HJ DNA is sandwiched between 2 RuvA tetramers; dsDNA enters through RuvA and exits via RuvB. An RuvB hexamer assembles on each DNA strand where it exits the tetramer. Each RuvB hexamer is contacted by two RuvA subunits (via domain III) on 2 adjacent RuvB subunits; this complex drives branch migration. In the full resolvosome a probable DNA-RuvA(4)-RuvB(12)-RuvC(2) complex forms which resolves the HJ.

Its subcellular location is the cytoplasm. In terms of biological role, the RuvA-RuvB-RuvC complex processes Holliday junction (HJ) DNA during genetic recombination and DNA repair, while the RuvA-RuvB complex plays an important role in the rescue of blocked DNA replication forks via replication fork reversal (RFR). RuvA specifically binds to HJ cruciform DNA, conferring on it an open structure. The RuvB hexamer acts as an ATP-dependent pump, pulling dsDNA into and through the RuvAB complex. HJ branch migration allows RuvC to scan DNA until it finds its consensus sequence, where it cleaves and resolves the cruciform DNA. The chain is Holliday junction branch migration complex subunit RuvA from Clostridium perfringens (strain SM101 / Type A).